The primary structure comprises 238 residues: IkB-like protein (238 aa).

4 ANK repeats span residues Asn-47–Glu-76, Asp-86–Leu-119, Asn-123–Gln-152, and Arg-157–Tyr-186. The short motif at Pro-80–Asp-86 is the Nuclear localization signal element. The Nuclear localization signal motif lies at Lys-202–Lys-213. A PxIxITxC motif; Interaction with host PPP3CA motif is present at residues Pro-205–Cys-212. The short motif at Phe-227–Val-230 is the FLCV motif element.

It belongs to the asfivirus A238L family. In terms of assembly, interacts with host PPIA. Interacts with host PPP3CA/Calcineurin. Interacts with host RELA/p65; interaction of the 32 kDa form with host RELA results in the formation of a stable complex with NF-kappa-B. Interacts with host PPP3R1. Interacts with host EP300; this interaction inhibits the association of host EP300 with host RELA, JUN and NFATC2. In terms of processing, the protein exists in a 28 kDa and a 32 kDa form, probably due to post-translational modifications which are neither phosphorylation, nor sumoylation.

It localises to the host nucleus. The protein resides in the host cytoplasm. In terms of biological role, ikB-like protein that inhibits the binding of NF-kappa-B to DNA, thereby downregulating pro-inflammatory cytokine production. Forms a heterodimer with the NF-kappa-B subunit RELA/p65 and prevents the activation of the NF-kappa-B transcription factor. Inhibits calcineurin function, which is required for the induction of nuclear factor of activated T cells (NFAT)-dependent immune response genes. Prevents the binding of substrates to calcineurin without affecting the phosphatase activity. Does not contain the serine residues that are phosphorylated by host IkB kinase and thus is not degraded following stimulation of the NFkB pathway. This is IkB-like protein (A238L) from African swine fever virus (isolate Warthog/Namibia/Wart80/1980) (ASFV).